The sequence spans 214 residues: MRIILLGAPGAGKGTQAQFIMAKFGIPQISTGDMLRAAIKAGTELGKQAKSVIDAGQLVSDDIILGLVKERIAQDDCAKGFLLDGFPRTIPQADGLKEVGVVVDYVIEFDVADSVIVERMAGRRAHLASGRTYHNVYNPPKVEGKDDVTGEDLVIREDDKEETVLARLGVYHNQTAPLIAYYGKEAEAGNTQYLKFDGTKAVAEVSAELEKALA.

Position 10 to 15 (10 to 15) interacts with ATP; it reads GAGKGT. The NMP stretch occupies residues 30-59; the sequence is STGDMLRAAIKAGTELGKQAKSVIDAGQLV. Residues Thr31, Arg36, 57–59, 85–88, and Gln92 contribute to the AMP site; these read QLV and GFPR. The segment at 122 to 159 is LID; sequence GRRAHLASGRTYHNVYNPPKVEGKDDVTGEDLVIREDD. Residues Arg123 and 132–133 each bind ATP; that span reads TY. Residues Arg156 and Arg167 each contribute to the AMP site. Position 200 (Lys200) interacts with ATP.

The protein belongs to the adenylate kinase family. In terms of assembly, monomer.

The protein localises to the cytoplasm. It catalyses the reaction AMP + ATP = 2 ADP. It participates in purine metabolism; AMP biosynthesis via salvage pathway; AMP from ADP: step 1/1. Functionally, catalyzes the reversible transfer of the terminal phosphate group between ATP and AMP. Plays an important role in cellular energy homeostasis and in adenine nucleotide metabolism. The polypeptide is Adenylate kinase (Photobacterium profundum (strain SS9)).